We begin with the raw amino-acid sequence, 384 residues long: N-acetylneuraminate epimerase (384 aa).

The N-terminal stretch at 1–29 (MGMQMKNFKKMMTLMALCLSVAITTSGYA) is a signal peptide. Kelch repeat units follow at residues 51-95 (VIYV…VFLN), 97-149 (ELYV…VKLN), 151-184 (TMVLITGGVNEHIFDKYFIDIEAADESEKNKVIY), 185-230 (NYFN…VMEN), 233-282 (LMLI…LAGA), 304-353 (QNYT…SYGD), and 355-384 (VFLIGGENAKGKPVSSVTSFTMRDGNLLIK). Catalysis depends on Glu-239, which acts as the Proton acceptor.

This sequence belongs to the NanM family. In terms of assembly, homodimer.

The protein localises to the periplasm. The enzyme catalyses N-acetyl-alpha-neuraminate = N-acetyl-beta-neuraminate. Functionally, converts alpha-N-acetylneuranimic acid (Neu5Ac) to the beta-anomer, accelerating the equilibrium between the alpha- and beta-anomers. Probably facilitates sialidase-negative bacteria to compete successfully for limited amounts of extracellular Neu5Ac, which is likely taken up in the beta-anomer. In addition, the rapid removal of sialic acid from solution might be advantageous to the bacterium to damp down host responses. The chain is N-acetylneuraminate epimerase from Salmonella enteritidis PT4 (strain P125109).